Here is a 154-residue protein sequence, read N- to C-terminus: Endoribonuclease YbeY (154 aa).

His113, His117, and His123 together coordinate Zn(2+).

Belongs to the endoribonuclease YbeY family. Requires Zn(2+) as cofactor.

It is found in the cytoplasm. Its function is as follows. Single strand-specific metallo-endoribonuclease involved in late-stage 70S ribosome quality control and in maturation of the 3' terminus of the 16S rRNA. This is Endoribonuclease YbeY from Verminephrobacter eiseniae (strain EF01-2).